An 880-amino-acid polypeptide reads, in one-letter code: Valine--tRNA ligase (880 aa).

Residues 49-59 carry the 'HIGH' region motif; sequence PNVTGKLHLGH. A 'KMSKS' region motif is present at residues 525-529; the sequence is KMSKS. Lysine 528 contacts ATP. Residues 809–880 are a coiled coil; that stretch reads LEGLINIDEE…VEKRIAELKN (72 aa).

It belongs to the class-I aminoacyl-tRNA synthetase family. ValS type 1 subfamily. As to quaternary structure, monomer.

The protein resides in the cytoplasm. It carries out the reaction tRNA(Val) + L-valine + ATP = L-valyl-tRNA(Val) + AMP + diphosphate. Its function is as follows. Catalyzes the attachment of valine to tRNA(Val). As ValRS can inadvertently accommodate and process structurally similar amino acids such as threonine, to avoid such errors, it has a 'posttransfer' editing activity that hydrolyzes mischarged Thr-tRNA(Val) in a tRNA-dependent manner. The protein is Valine--tRNA ligase of Bacillus licheniformis (strain ATCC 14580 / DSM 13 / JCM 2505 / CCUG 7422 / NBRC 12200 / NCIMB 9375 / NCTC 10341 / NRRL NRS-1264 / Gibson 46).